The sequence spans 562 residues: MNSPGAVDVVIVGAGPVGLTLANILGGQGVRTLIIEERETLIDYPRGVGLDDESLRTFQSIGLVDAILPHTVPNQILRFYDANRRLLAEMAPPDARFGWPKRNGFVQPMVDAELLAGLDRFDHVEVMWGRRMQTIAEDADGVTVEVSGPDGPASVHAQYVVGCDGGRSATRHLMGVSFDGTTSSTRWVVIDLANDPLGHPNSEVGADPQRPYASISIAHGIRRFEFMIHADETDEQAEDPEFVAELLRPFVPHPDRVDVIRRRVYTHHSRIAGSFRKGRMLLAGDAAHLMPVWQGQGYNSGIRDAFNLGWKLAAVVRGQAGDALLDTYDAERRKHARAMIDLSTMVGRVISPTNRKVAALRDKLIRGASIVPTLKRYVLEMRFKPMPRYHEGAVYHAKPPTPASPVGTLFIQPRVDTREQDNVLLDDVLGTGFAVLCWNNNPRTLLGEAAFTRWKALGATFIAARPSTQLHWTKDDDPDVVIVGDRTGALKAFFDAHTESVLVLRPDRCIAGADIAQRAPELSTALFGILHLRQGGENGATGPVLYVPQPTAESSGTVGRAS.

Residues 8-37 and 275-285 contribute to the FAD site; these read DVVI…IIEE and FRKGRMLLAGD.

It belongs to the PheA/TfdB FAD monooxygenase family. FAD serves as cofactor.

The enzyme catalyses 3-(3-hydroxyphenyl)propanoate + NADH + O2 + H(+) = 3-(2,3-dihydroxyphenyl)propanoate + NAD(+) + H2O. It catalyses the reaction (2E)-3-(3-hydroxyphenyl)prop-2-enoate + NADH + O2 + H(+) = (2E)-3-(2,3-dihydroxyphenyl)prop-2-enoate + NAD(+) + H2O. It participates in aromatic compound metabolism; 3-phenylpropanoate degradation. Catalyzes the insertion of one atom of molecular oxygen into position 2 of the phenyl ring of 3-(3-hydroxyphenyl)propionate (3-HPP) and hydroxycinnamic acid (3HCI). The protein is 3-(3-hydroxy-phenyl)propionate/3-hydroxycinnamic acid hydroxylase of Mycolicibacterium smegmatis (strain ATCC 700084 / mc(2)155) (Mycobacterium smegmatis).